The chain runs to 143 residues: Sporulation-specific cell division protein SsgB (143 aa).

This sequence belongs to the SsgA family. Interacts with SsgA. Interacts with FtsZ (via N-terminus).

The protein localises to the cell septum. Involved in sporulation-specific cell division. Required for early stages of sporulation. Important in the process of growth cessation prior to sporulation-specific cell division. Recruits cell division protein FtsZ to the future septum sites and tethers the contractile ring structure (Z ring) to the cytoplasmic membrane during sporulation. Stimulates polymerization and filament length of FtsZ in vitro. The protein is Sporulation-specific cell division protein SsgB of Salinispora tropica (strain ATCC BAA-916 / DSM 44818 / JCM 13857 / NBRC 105044 / CNB-440).